The primary structure comprises 458 residues: N-acetylgalactosamine kinase (458 aa).

R43, E49, H50, and D52 together coordinate alpha-D-galactose. Residues G143, S145, and S146 each contribute to the ATP site. D190 is a binding site for alpha-D-galactose. Residue D190 is the Proton acceptor of the active site. ATP-binding residues include N233 and K234.

Belongs to the GHMP kinase family. GalK subfamily. As to quaternary structure, monomer.

It carries out the reaction N-acetyl-alpha-D-galactosamine + ATP = N-acetyl-alpha-D-galactosamine 1-phosphate + ADP + H(+). Acts on GalNAc. Also acts as a galactokinase when galactose is present at high concentrations. This chain is N-acetylgalactosamine kinase (Galk2), found in Mus musculus (Mouse).